The chain runs to 248 residues: Pyridoxal 4-dehydrogenase (248 aa).

An NAD(+)-binding site is contributed by 11 to 35 (LVTGAAQGIGKAIAARLAADGATVI). Serine 141 is a binding site for substrate. Tyrosine 154 serves as the catalytic Proton acceptor.

Belongs to the short-chain dehydrogenases/reductases (SDR) family. Homotetramer.

It carries out the reaction pyridoxal + NAD(+) = 4-pyridoxolactone + NADH + H(+). Its pathway is cofactor degradation; B6 vitamer degradation; 4-pyridoxate from pyridoxal: step 1/2. In terms of biological role, involved in the degradation of pyridoxine or pyridoxamine (free, phosphate-unbound, forms of vitamin B6). Oxidizes pyridoxal to 4-pyridoxolactone, but does not have activity toward pyridoxal 5'-phosphate, pyridoxine, pyridoxamine, pyridoxamine 5'-phosphate, 4-phthalaldehyde, 2-nitrobenzaldehyde, pyridine, formaldehyde, 2-carboxybenzaldehyde or sugars. The sequence is that of Pyridoxal 4-dehydrogenase from Mesorhizobium japonicum (strain LMG 29417 / CECT 9101 / MAFF 303099) (Mesorhizobium loti (strain MAFF 303099)).